Reading from the N-terminus, the 92-residue chain is Small ribosomal subunit protein uS19 (92 aa).

Belongs to the universal ribosomal protein uS19 family.

Functionally, protein S19 forms a complex with S13 that binds strongly to the 16S ribosomal RNA. This Bacillus licheniformis (strain ATCC 14580 / DSM 13 / JCM 2505 / CCUG 7422 / NBRC 12200 / NCIMB 9375 / NCTC 10341 / NRRL NRS-1264 / Gibson 46) protein is Small ribosomal subunit protein uS19.